A 403-amino-acid polypeptide reads, in one-letter code: Acetylornithine aminotransferase (403 aa).

Pyridoxal 5'-phosphate-binding positions include 107–108 (GA) and phenylalanine 140. N(2)-acetyl-L-ornithine is bound at residue arginine 143. 225–228 (DEVQ) provides a ligand contact to pyridoxal 5'-phosphate. The residue at position 254 (lysine 254) is an N6-(pyridoxal phosphate)lysine. A N(2)-acetyl-L-ornithine-binding site is contributed by serine 282. Residue threonine 283 coordinates pyridoxal 5'-phosphate.

The protein belongs to the class-III pyridoxal-phosphate-dependent aminotransferase family. ArgD subfamily. Homodimer. The cofactor is pyridoxal 5'-phosphate.

Its subcellular location is the cytoplasm. It catalyses the reaction N(2)-acetyl-L-ornithine + 2-oxoglutarate = N-acetyl-L-glutamate 5-semialdehyde + L-glutamate. It functions in the pathway amino-acid biosynthesis; L-arginine biosynthesis; N(2)-acetyl-L-ornithine from L-glutamate: step 4/4. In Vibrio parahaemolyticus serotype O3:K6 (strain RIMD 2210633), this protein is Acetylornithine aminotransferase.